The following is a 304-amino-acid chain: Putative ankyrin repeat protein R598 (304 aa).

7 ANK repeats span residues 7–36 (NIVT…SINL), 77–107 (YIST…PVDF), 122–151 (GSNH…DVNA), 152–181 (HNYL…NVLR), 183–209 (ANGN…EIDM), 210–239 (NLSR…DINK), and 265–293 (FDFT…NVDI).

This Acanthamoeba polyphaga (Amoeba) protein is Putative ankyrin repeat protein R598.